The following is a 224-amino-acid chain: 7-cyano-7-deazaguanine synthase (224 aa).

Leu-10–Val-20 is a binding site for ATP. Cys-189, Cys-199, Cys-202, and Cys-205 together coordinate Zn(2+).

The protein belongs to the QueC family. It depends on Zn(2+) as a cofactor.

It catalyses the reaction 7-carboxy-7-deazaguanine + NH4(+) + ATP = 7-cyano-7-deazaguanine + ADP + phosphate + H2O + H(+). It functions in the pathway purine metabolism; 7-cyano-7-deazaguanine biosynthesis. Functionally, catalyzes the ATP-dependent conversion of 7-carboxy-7-deazaguanine (CDG) to 7-cyano-7-deazaguanine (preQ(0)). This chain is 7-cyano-7-deazaguanine synthase, found in Pseudomonas putida (strain W619).